Here is a 482-residue protein sequence, read N- to C-terminus: tRNA sulfurtransferase (482 aa).

The THUMP domain occupies 58–160; sequence VEALQELSRV…GNKAYLYSNV (103 aa). Residues 178–179, 203–204, Arg-260, Gly-282, and Gln-291 each bind ATP; these read LF and HY. The cysteines at positions 341 and 444 are disulfide-linked. Positions 400 to 482 constitute a Rhodanese domain; it reads IPGDSIIIDV…RYRAGLEKTR (83 aa). The active-site Cysteine persulfide intermediate is Cys-444.

It belongs to the ThiI family.

It localises to the cytoplasm. It catalyses the reaction [ThiI sulfur-carrier protein]-S-sulfanyl-L-cysteine + a uridine in tRNA + 2 reduced [2Fe-2S]-[ferredoxin] + ATP + H(+) = [ThiI sulfur-carrier protein]-L-cysteine + a 4-thiouridine in tRNA + 2 oxidized [2Fe-2S]-[ferredoxin] + AMP + diphosphate. The catalysed reaction is [ThiS sulfur-carrier protein]-C-terminal Gly-Gly-AMP + S-sulfanyl-L-cysteinyl-[cysteine desulfurase] + AH2 = [ThiS sulfur-carrier protein]-C-terminal-Gly-aminoethanethioate + L-cysteinyl-[cysteine desulfurase] + A + AMP + 2 H(+). Its pathway is cofactor biosynthesis; thiamine diphosphate biosynthesis. Its function is as follows. Catalyzes the ATP-dependent transfer of a sulfur to tRNA to produce 4-thiouridine in position 8 of tRNAs, which functions as a near-UV photosensor. Also catalyzes the transfer of sulfur to the sulfur carrier protein ThiS, forming ThiS-thiocarboxylate. This is a step in the synthesis of thiazole, in the thiamine biosynthesis pathway. The sulfur is donated as persulfide by IscS. The chain is tRNA sulfurtransferase from Desulfurococcus amylolyticus (strain DSM 18924 / JCM 16383 / VKM B-2413 / 1221n) (Desulfurococcus kamchatkensis).